We begin with the raw amino-acid sequence, 188 residues long: Early nodulin-like protein 5 (188 aa).

An N-terminal signal peptide occupies residues 1-24; that stretch reads MDSSKKIIIVMFLVTFYMFSCVSS. The Phytocyanin domain maps to 25-128; it reads TEFEVGGENG…GQKMIVKVME (104 aa). The cysteines at positions 82 and 116 are disulfide-linked. Residues 127–157 form a disordered region; that stretch reads METESSTESPPPSSSSSSSSSSSLPASTPKA. Positions 129-155 are enriched in low complexity; sequence TESSTESPPPSSSSSSSSSSSLPASTP. Ser-170 carries GPI-anchor amidated serine lipidation. Positions 171–188 are cleaved as a propeptide — removed in mature form; that stretch reads SSGFVVSAVLIVSVFGLV.

The protein belongs to the early nodulin-like (ENODL) family. Mostly expressed in leaves and flowers, and, to a lower extent, in stems.

The protein localises to the cell membrane. Its function is as follows. May act as a carbohydrate transporter. Mainly required for reproductive functions. The protein is Early nodulin-like protein 5 of Arabidopsis thaliana (Mouse-ear cress).